Consider the following 278-residue polypeptide: Dermonecrotic toxin LhSicTox-alphaIV1ii (278 aa).

The active site involves His5. 2 residues coordinate Mg(2+): Glu25 and Asp27. Residue His41 is the Nucleophile of the active site. Intrachain disulfides connect Cys45/Cys51 and Cys47/Cys192. A Mg(2+)-binding site is contributed by Asp85.

The protein belongs to the arthropod phospholipase D family. Class II subfamily. Mg(2+) serves as cofactor. As to expression, expressed by the venom gland.

It localises to the secreted. The catalysed reaction is an N-(acyl)-sphingosylphosphocholine = an N-(acyl)-sphingosyl-1,3-cyclic phosphate + choline. The enzyme catalyses an N-(acyl)-sphingosylphosphoethanolamine = an N-(acyl)-sphingosyl-1,3-cyclic phosphate + ethanolamine. It carries out the reaction a 1-acyl-sn-glycero-3-phosphocholine = a 1-acyl-sn-glycero-2,3-cyclic phosphate + choline. It catalyses the reaction a 1-acyl-sn-glycero-3-phosphoethanolamine = a 1-acyl-sn-glycero-2,3-cyclic phosphate + ethanolamine. In terms of biological role, dermonecrotic toxins cleave the phosphodiester linkage between the phosphate and headgroup of certain phospholipids (sphingolipid and lysolipid substrates), forming an alcohol (often choline) and a cyclic phosphate. This toxin acts on sphingomyelin (SM). It may also act on ceramide phosphoethanolamine (CPE), lysophosphatidylcholine (LPC) and lysophosphatidylethanolamine (LPE), but not on lysophosphatidylserine (LPS), and lysophosphatidylglycerol (LPG). It acts by transphosphatidylation, releasing exclusively cyclic phosphate products as second products. Induces dermonecrosis, hemolysis, increased vascular permeability, edema, inflammatory response, and platelet aggregation. The chain is Dermonecrotic toxin LhSicTox-alphaIV1ii from Loxosceles hirsuta (Recluse spider).